Consider the following 155-residue polypeptide: 6,7-dimethyl-8-ribityllumazine synthase (155 aa).

Residues Phe-23, 57 to 59 (AFE), and 81 to 83 (AVI) contribute to the 5-amino-6-(D-ribitylamino)uracil site. Residue 86–87 (ST) participates in (2S)-2-hydroxy-3-oxobutyl phosphate binding. Residue His-89 is the Proton donor of the active site. Phe-114 contributes to the 5-amino-6-(D-ribitylamino)uracil binding site. Arg-128 lines the (2S)-2-hydroxy-3-oxobutyl phosphate pocket.

It belongs to the DMRL synthase family.

It carries out the reaction (2S)-2-hydroxy-3-oxobutyl phosphate + 5-amino-6-(D-ribitylamino)uracil = 6,7-dimethyl-8-(1-D-ribityl)lumazine + phosphate + 2 H2O + H(+). It functions in the pathway cofactor biosynthesis; riboflavin biosynthesis; riboflavin from 2-hydroxy-3-oxobutyl phosphate and 5-amino-6-(D-ribitylamino)uracil: step 1/2. Its function is as follows. Catalyzes the formation of 6,7-dimethyl-8-ribityllumazine by condensation of 5-amino-6-(D-ribitylamino)uracil with 3,4-dihydroxy-2-butanone 4-phosphate. This is the penultimate step in the biosynthesis of riboflavin. The chain is 6,7-dimethyl-8-ribityllumazine synthase from Citrifermentans bemidjiense (strain ATCC BAA-1014 / DSM 16622 / JCM 12645 / Bem) (Geobacter bemidjiensis).